Consider the following 421-residue polypeptide: Serine--tRNA ligase (421 aa).

Residue 229–231 (TSE) participates in L-serine binding. 260-262 (RRE) is an ATP binding site. Glu283 is an L-serine binding site. Residue 347–350 (EISS) participates in ATP binding. Ser381 serves as a coordination point for L-serine.

The protein belongs to the class-II aminoacyl-tRNA synthetase family. Type-1 seryl-tRNA synthetase subfamily. As to quaternary structure, homodimer. The tRNA molecule binds across the dimer.

It is found in the cytoplasm. The enzyme catalyses tRNA(Ser) + L-serine + ATP = L-seryl-tRNA(Ser) + AMP + diphosphate + H(+). It catalyses the reaction tRNA(Sec) + L-serine + ATP = L-seryl-tRNA(Sec) + AMP + diphosphate + H(+). Its pathway is aminoacyl-tRNA biosynthesis; selenocysteinyl-tRNA(Sec) biosynthesis; L-seryl-tRNA(Sec) from L-serine and tRNA(Sec): step 1/1. Functionally, catalyzes the attachment of serine to tRNA(Ser). Is also able to aminoacylate tRNA(Sec) with serine, to form the misacylated tRNA L-seryl-tRNA(Sec), which will be further converted into selenocysteinyl-tRNA(Sec). This is Serine--tRNA ligase from Fusobacterium nucleatum subsp. nucleatum (strain ATCC 25586 / DSM 15643 / BCRC 10681 / CIP 101130 / JCM 8532 / KCTC 2640 / LMG 13131 / VPI 4355).